Consider the following 663-residue polypeptide: MGVYRIRVSTGDSVYAGSNNEVYLWLIGQHGEASLGKLFRPCRNSEAEFKVDVSEYLGPLLFVRVQKWHYLKEDAWFCNWISVKGPGDQGSEYTFPCYRWVQGTSILNLPEGTGCTVVEDSQGLFRNHREEELEERRSLYRWGNWKDGTILNVAATSISDLPVDQRFREDKRLEFEASQVLGTMDTVINFPKNTVTCWKSLDDFNYVFKSGHTKMAERVRNSWKEDAFFGYQFLNGANPMVLKRSTCLPARLVFPPGMEKLQAQLDEELKKGTLFEADFFLLDGIKANVILCSQQYLAAPLVMLKLQPDGQLLPIAIQLELPKTGSTPPPIFTPLDPPMDWLLAKCWVRSSDLQLHELQAHLLRGHLVAEVFAVATMRCLPSVHPVFKLLVPHLLYTMEINVRARSDLISERGFFDKVMSTGGGGHLDLLKQAGAFLTYSSLCPPDDLAERGLLDIDTCFYAKDALQLWQVMNRYVVGMFDLYYKTDQAVQDDYELQSWCQEITEIGLQGAQDRGFPTSLQSRAQACHFITMCIFTCTAQHSSIHLGQLDWFYWVPNAPCTMRLPPPKTKDATMEKLMATLPNPNQSTLQINVVWLLGRRQAVMVPLGQHSEEHFPNPEAKAVLKKFREELAALDKEIEIRNKSLDIPYEYLRPSLVENSVAI.

Positions 2 to 115 (GVYRIRVSTG…ILNLPEGTGC (114 aa)) constitute a PLAT domain. Residues 116–663 (TVVEDSQGLF…PSLVENSVAI (548 aa)) form the Lipoxygenase domain. Residues His361, His366, His541, His545, and Ile663 each coordinate Fe cation.

This sequence belongs to the lipoxygenase family. In terms of assembly, interacts with PEBP1; in response to IL13/interleukin-13, prevents the interaction of PEBP1 with RAF1 to activate the ERK signaling cascade. The cofactor is Fe cation. In terms of tissue distribution, found in pituitary and pineal glands as well as leukocytes, kidney, aorta, small intestine and cornea. Also expressed by resident peritoneal macrophages (at protein level).

The protein localises to the cytoplasm. It localises to the cytosol. The protein resides in the cell membrane. It is found in the lipid droplet. The catalysed reaction is (5Z,8Z,11Z,14Z)-eicosatetraenoate + O2 = (12S)-hydroperoxy-(5Z,8Z,10E,14Z)-eicosatetraenoate. It carries out the reaction (5Z,8Z,11Z,14Z)-eicosatetraenoate + O2 = (15S)-hydroperoxy-(5Z,8Z,11Z,13E)-eicosatetraenoate. The enzyme catalyses (9Z,12Z)-octadecadienoate + O2 = (13S)-hydroperoxy-(9Z,11E)-octadecadienoate. It catalyses the reaction (5Z,8Z,11Z,14Z)-eicosatetraenoate + 2 O2 = (14R,15S)-dihydroperoxy-(5Z,8Z,10E,12E)-eicosatetraenoate. The catalysed reaction is (5Z,8Z,11Z,14Z)-eicosatetraenoate + 2 O2 = (8S,15S)-dihydroperoxy-(5Z,9E,11Z,13E)-eicosatetraenoate. It carries out the reaction (14S,15R)-epoxy-(5Z,8Z,11Z)-eicosatrienoate + O2 = (8S)-hydroperoxy-(14S,15R)-epoxy-(5Z,9E,11Z)-eicosatrienoate. The enzyme catalyses (14S,15R)-epoxy-(5Z,8Z,11Z)-eicosatrienoate + O2 = (12S)-hydroperoxy-(14S,15R)-epoxy-(5Z,8Z,10E)-eicosatrienoate. It catalyses the reaction (14R,15S)-epoxy-(5Z,8Z,11Z)-eicosatrienoate + O2 = (5S)-hydroperoxy-(14R,15S)-epoxy-(6E,8Z,11Z)-eicosatrienoate. The catalysed reaction is (14R,15S)-epoxy-(5Z,8Z,11Z)-eicosatrienoate + O2 = (12S)-hydroperoxy-(14R,15S)-epoxy-(5Z,8Z,10E)-eicosatrienoate. It carries out the reaction (15R)-hydroperoxy-(5Z,8Z,11Z,13E)-eicosatetraenoate = 15-oxo-(5Z,8Z,11Z,13E)-eicosatetraenoate + H2O. The enzyme catalyses (15S)-hydroperoxy-(5Z,8Z,11Z,13E)-eicosatetraenoate = (14S,15S)-epoxy-(5Z,8Z,10E,12E)-eicosatetraenoate + H2O. It catalyses the reaction (12S)-hydroperoxy-(5Z,8Z,10E,14Z)-eicosatetraenoate = (8S)-hydroxy-(11S,12S)-epoxy-(5Z,9E,14Z)-eicosatrienoate. The catalysed reaction is (4Z,7Z,10Z,13Z,16Z)-docosapentaenoate + O2 = 14-hydroperoxy-(4Z,7Z,10Z,12E,16Z)-docosapentaenoate. It carries out the reaction (7Z,10Z,13Z,16Z,19Z)-docosapentaenoate + O2 = 14-hydroperoxy-(7Z,10Z,12E,16Z,19Z)-docosapentaenoate. The enzyme catalyses (4Z,7Z,10Z,13Z,16Z,19Z)-docosahexaenoate + O2 = (14S)-hydroperoxy-(4Z,7Z,10Z,12E,16Z,19Z)-docosahexaenoate. It catalyses the reaction (4Z,7Z,10Z,13Z,16Z,19Z)-docosahexaenoate + O2 = (17S)-hydroperoxy-(4Z,7Z,10Z,13Z,15E,19Z)-docosahexaenoate. The catalysed reaction is (7S)-hydroperoxy-(4Z,8E,10Z,13Z,16Z,19Z)-docosahexaenoate + O2 = (7S,14S)-dihydroperoxy-(4Z,8E,10Z,12E,16Z,19Z)-docosahexaenoate. It carries out the reaction (7S)-hydroperoxy-(4Z,8E,10Z,13Z,16Z,19Z)-docosahexaenoate + O2 = (7S,17S)-dihydroperoxy-(4Z,8E,10Z,13Z,15E,19Z)-docosahexaenoate. The enzyme catalyses (4Z,7Z,10Z,13Z,16Z,19Z)-docosahexaenoate + O2 = (11S)-hydroperoxy-(4Z,7Z,9E,13Z,16Z,19Z)-docosahexaenoate. It catalyses the reaction N-(5Z,8Z,11Z,14Z)-eicosatetraenoyl-taurine + O2 = N-(12S)-hydroperoxy-(5Z,8Z,10E,14Z)-eicosatetraenoyl-taurine. The catalysed reaction is N-(5Z,8Z,11Z,14Z)-eicosatetraenoyl-gamma-aminobutanoate + O2 = N-(12S)-hydroperoxy-(5Z,8Z,10E,14Z)-eicosatetraenoyl-gamma-aminobutanoate. It carries out the reaction N-(5Z,8Z,11Z,14Z)-eicosatetraenoyl-glycine + O2 = N-(12S)-hydroperoxy-(5Z,8Z,10E,14Z)-eicosatetraenoyl-glycine. The enzyme catalyses N-(5Z,8Z,11Z,14Z)-eicosatetraenoyl-L-alanine + O2 = N-(12S)-hydroperoxy-(5Z,8Z,10E,14Z)-eicosatetraenoyl-alanine. It catalyses the reaction N-(5Z,8Z,11Z,14Z)-eicosatetraenoyl-taurine + O2 = N-(15S)-hydroperoxy-(5Z,8Z,11Z,13E)-eicosatetraenoyl-taurine. The catalysed reaction is N-(5Z,8Z,11Z,14Z)-eicosatetraenoyl-gamma-aminobutanoate + O2 = N-(15S)-hydroperoxy-(5Z,8Z,11Z,13E)-eicosatetraenoyl-gamma-aminobutanoate. It carries out the reaction N-(5Z,8Z,11Z,14Z)-eicosatetraenoyl-glycine + O2 = N-(15S)-hydroperoxy-(5Z,8Z,11Z,13E)-eicosatetraenoyl-glycine. The enzyme catalyses N-(5Z,8Z,11Z,14Z)-eicosatetraenoyl-L-alanine + O2 = N-(15S)-hydroperoxy-(5Z,8Z,11Z,13E)-eicosatetraenoyl-alanine. The protein operates within lipid metabolism; hydroperoxy eicosatetraenoic acid biosynthesis. Non-heme iron-containing dioxygenase that catalyzes the stereo-specific peroxidation of free and esterified polyunsaturated fatty acids generating a spectrum of bioactive lipid mediators. It inserts peroxyl groups at C12 or C15 of arachidonate ((5Z,8Z,11Z,14Z)-eicosatetraenoate) producing both 12-hydroperoxyeicosatetraenoate/12-HPETE and 15-hydroperoxyeicosatetraenoate/15-HPETE. It may then act on 12-HPETE to produce hepoxilins, which may show pro-inflammatory properties. Can also peroxidize linoleate ((9Z,12Z)-octadecadienoate) to 13-hydroperoxyoctadecadienoate. May participate in the sequential oxidations of DHA ((4Z,7Z,10Z,13Z,16Z,19Z)-docosahexaenoate) to generate specialized pro-resolving mediators (SPMs)like resolvin D5 ((7S,17S)-diHPDHA) and (7S,14S)-diHPDHA, that actively down-regulate the immune response and have anti-aggregation properties with platelets. Can convert epoxy fatty acids to hydroperoxy-epoxides derivatives followed by an intramolecular nucleophilic substitution leading to the formation of monocyclic endoperoxides. Plays an important role during the maintenance of self-tolerance by peroxidizing membrane-bound phosphatidylethanolamine which can then signal the sorting process for clearance of apoptotic cells during inflammation and prevent an autoimmune response. In addition to its role in the immune and inflammatory responses, this enzyme may play a role in epithelial wound healing in the cornea through production of lipoxin A4 (LXA(4)) and docosahexaenoic acid-derived neuroprotectin D1 (NPD1; 10R,17S-HDHA), both lipid autacoids exhibit anti-inflammatory and neuroprotective properties. Furthermore, it may regulate actin polymerization which is crucial for several biological processes such as the phagocytosis of apoptotic cells. It is also implicated in the generation of endogenous ligands for peroxisome proliferator activated receptor (PPAR-gamma), hence modulating macrophage development and function. It may also exert a negative effect on skeletal development by regulating bone mass through this pathway. As well as participates in ER stress and downstream inflammation in adipocytes, pancreatic islets, and liver. Finally, it is also involved in the cellular response to IL13/interleukin-13. This is Polyunsaturated fatty acid lipoxygenase ALOX15 from Mus musculus (Mouse).